The following is a 469-amino-acid chain: 3-isopropylmalate dehydratase large subunit (469 aa).

[4Fe-4S] cluster contacts are provided by Cys-347, Cys-410, and Cys-413.

Belongs to the aconitase/IPM isomerase family. LeuC type 1 subfamily. Heterodimer of LeuC and LeuD. [4Fe-4S] cluster is required as a cofactor.

The catalysed reaction is (2R,3S)-3-isopropylmalate = (2S)-2-isopropylmalate. It participates in amino-acid biosynthesis; L-leucine biosynthesis; L-leucine from 3-methyl-2-oxobutanoate: step 2/4. Catalyzes the isomerization between 2-isopropylmalate and 3-isopropylmalate, via the formation of 2-isopropylmaleate. This is 3-isopropylmalate dehydratase large subunit from Polynucleobacter necessarius subsp. necessarius (strain STIR1).